Consider the following 308-residue polypeptide: Aspartate carbamoyltransferase catalytic subunit (308 aa).

Carbamoyl phosphate-binding residues include arginine 49 and threonine 50. L-aspartate is bound at residue lysine 77. Residues arginine 99, histidine 127, and glutamine 130 each coordinate carbamoyl phosphate. L-aspartate is bound by residues arginine 160 and arginine 211. 2 residues coordinate carbamoyl phosphate: alanine 252 and proline 253.

It belongs to the aspartate/ornithine carbamoyltransferase superfamily. ATCase family. As to quaternary structure, heterododecamer (2C3:3R2) of six catalytic PyrB chains organized as two trimers (C3), and six regulatory PyrI chains organized as three dimers (R2).

The enzyme catalyses carbamoyl phosphate + L-aspartate = N-carbamoyl-L-aspartate + phosphate + H(+). It participates in pyrimidine metabolism; UMP biosynthesis via de novo pathway; (S)-dihydroorotate from bicarbonate: step 2/3. In terms of biological role, catalyzes the condensation of carbamoyl phosphate and aspartate to form carbamoyl aspartate and inorganic phosphate, the committed step in the de novo pyrimidine nucleotide biosynthesis pathway. This chain is Aspartate carbamoyltransferase catalytic subunit, found in Geobacillus kaustophilus (strain HTA426).